The chain runs to 862 residues: Fork head protein homolog 2 (862 aa).

The 70-residue stretch at 83 to 152 (VSIGRNTDPL…NGAKVNFQRT (70 aa)) folds into the FHA domain. The segment at residues 339–430 (VKPPHSYATM…QQEFLNKWNT (92 aa)) is a DNA-binding region (fork-head). Disordered stretches follow at residues 498–528 (PSKGNLPASQQSQPPVSHQNQSQQPPPQEQR), 611–663 (SDSA…GTTT), 698–730 (PERGSANRARSPLHSNSNNTNNNGANNSNLQTS), and 750–846 (ESNN…ANAK). Residues 504 to 520 (PASQQSQPPVSHQNQSQ) show a composition bias toward low complexity. Positions 611–644 (SDSADKSTNNNGGTKMNLPAISTSSLDENGNLEP) are enriched in polar residues. The span at 645 to 655 (TTTTSSGNSNS) shows a compositional bias: low complexity. Ser708 is modified (phosphoserine). Residues 712–726 (SNSNNTNNNGANNSN) are compositionally biased toward low complexity. 2 stretches are compositionally biased toward polar residues: residues 750 to 770 (ESNNDNRRLTPSTSKSQNVKS) and 778 to 788 (LQFSSTNNTPA). Positions 804-829 (IKAKENENATSEKDSDSNSNDLETKD) are enriched in basic and acidic residues. Residues 830–844 (INSSPLKNQGGSTAN) are compositionally biased toward polar residues. 2 positions are modified to phosphoserine: Ser832 and Ser833.

As to quaternary structure, interacts with MCM1. Interacts with NDD1. Interacts with the origin recognition complex (ORC) composed of ORC1 to ORC6.

It is found in the nucleus. Its subcellular location is the cytoplasm. It localises to the cytosol. In terms of biological role, transcription factor that regulates the expression of the CLB2 cluster of genes during the G2/M phase of the mitotic cell cycle. The CLB2 cluster of genes includes mitotic regulators such as CLB1, CLB2, CDC5 and CDC20 as well as SWI5 and ACE2, transcription factors required for the subsequent temporal wave of cell cycle regulated gene expression in the M/G1 phase interval. Involved in HMRa silencing. FKH1 and FKH2 associate with the coding regions of active genes and influence, in opposing ways, transcriptional elongation and termination, and coordinate early transcription elongation and pre-mRNA processing. Both FKH1 and FKH2 play a role as regulators of lifespan in collaboration with the anaphase-promoting complex (APC), likely through combined regulation of stress response, genomic stability, and cell cycle regulation. FKH1 and FKH2 function also in controlling yeast cell morphology by preventing preudohyphal growth. Acts as a rate-limiting replication origin activator via its interaction with the origin recognition complex (ORC). This chain is Fork head protein homolog 2, found in Saccharomyces cerevisiae (strain ATCC 204508 / S288c) (Baker's yeast).